A 238-amino-acid chain; its full sequence is Aspartate/glutamate leucyltransferase (238 aa).

It belongs to the R-transferase family. Bpt subfamily.

It is found in the cytoplasm. It carries out the reaction N-terminal L-glutamyl-[protein] + L-leucyl-tRNA(Leu) = N-terminal L-leucyl-L-glutamyl-[protein] + tRNA(Leu) + H(+). The catalysed reaction is N-terminal L-aspartyl-[protein] + L-leucyl-tRNA(Leu) = N-terminal L-leucyl-L-aspartyl-[protein] + tRNA(Leu) + H(+). In terms of biological role, functions in the N-end rule pathway of protein degradation where it conjugates Leu from its aminoacyl-tRNA to the N-termini of proteins containing an N-terminal aspartate or glutamate. The polypeptide is Aspartate/glutamate leucyltransferase (Shewanella sp. (strain MR-7)).